A 91-amino-acid polypeptide reads, in one-letter code: Large ribosomal subunit protein uL29 (91 aa).

The disordered stretch occupies residues 67–91 (AAPLAESSAPAKTKSRARKSKKEAL). A compositionally biased stretch (basic residues) spans 79–91 (TKSRARKSKKEAL).

It belongs to the universal ribosomal protein uL29 family.

The sequence is that of Large ribosomal subunit protein uL29 from Acidobacterium capsulatum (strain ATCC 51196 / DSM 11244 / BCRC 80197 / JCM 7670 / NBRC 15755 / NCIMB 13165 / 161).